The primary structure comprises 370 residues: Notoamide biosynthesis cluster protein J (370 aa).

A signal peptide spans 1-22; that stretch reads MRIMSIMLHLLATILLSSAVSA. Asparagine 159, asparagine 167, asparagine 192, asparagine 235, asparagine 282, asparagine 340, and asparagine 346 each carry an N-linked (GlcNAc...) asparagine glycan.

Part of the gene cluster that mediates the biosynthesis of notoamide, a fungal indole alkaloid that belongs to a family of natural products containing a characteristic bicyclo[2.2.2]diazaoctane core. The first step of notoamide biosynthesis involves coupling of L-proline and L-tryptophan by the bimodular NRPS notE, to produce cyclo-L-tryptophan-L-proline called brevianamide F. The reverse prenyltransferase notF then acts as a deoxybrevianamide E synthase and converts brevianamide F to deoxybrevianamide E via reverse prenylation at C-2 of the indole ring leading to the bicyclo[2.2.2]diazaoctane core. Deoxybrevianamide E is further hydroxylated at C-6 of the indole ring, likely catalyzed by the cytochrome P450 monooxygenase notG, to yield 6-hydroxy-deoxybrevianamide E. 6-hydroxy-deoxybrevianamide E is a specific substrate of the prenyltransferase notC for normal prenylation at C-7 to produce 6-hydroxy-7-prenyl-deoxybrevianamide, also called notoamide S. As the proposed pivotal branching point in notoamide biosynthesis, notoamide S can be diverted to notoamide E through an oxidative pyran ring closure putatively catalyzed by either notH cytochrome P450 monooxygenase or the notD FAD-linked oxidoreductase. This step would be followed by an indole 2,3-epoxidation-initiated pinacol-like rearrangement catalyzed by the notB FAD-dependent monooxygenase leading to the formation of notoamide C and notoamide D. On the other hand notoamide S is converted to notoamide T by notH (or notD), a bifunctional oxidase that also functions as the intramolecular Diels-Alderase responsible for generation of (+)-notoamide T. To generate antipodal (-)-notoaminide T, notH' (or notD') in Aspergillus versicolor is expected to catalyze a Diels-Alder reaction leading to the opposite stereochemistry. The remaining oxidoreductase notD (or notH) likely catalyzes the oxidative pyran ring formation to yield (+)-stephacidin A. The FAD-dependent monooxygenase notI is highly similar to notB and is predicted to catalyze a similar conversion from (+)-stephacidin A to (-)-notoamide B via the 2,3-epoxidation of (+)-stephacidin A followed by a pinacol-type rearrangement. Finally, it remains unclear which enzyme could be responsible for the final hydroxylation steps leading to notoamide A and sclerotiamide. The function of notJ in the notoamide biosynthesis has not been determined yet. The protein is Notoamide biosynthesis cluster protein J of Aspergillus sp. (strain MF297-2).